The sequence spans 110 residues: Large ribosomal subunit protein uL22 (110 aa).

This sequence belongs to the universal ribosomal protein uL22 family. As to quaternary structure, part of the 50S ribosomal subunit.

This protein binds specifically to 23S rRNA; its binding is stimulated by other ribosomal proteins, e.g. L4, L17, and L20. It is important during the early stages of 50S assembly. It makes multiple contacts with different domains of the 23S rRNA in the assembled 50S subunit and ribosome. In terms of biological role, the globular domain of the protein is located near the polypeptide exit tunnel on the outside of the subunit, while an extended beta-hairpin is found that lines the wall of the exit tunnel in the center of the 70S ribosome. The protein is Large ribosomal subunit protein uL22 of Exiguobacterium sp. (strain ATCC BAA-1283 / AT1b).